Reading from the N-terminus, the 226-residue chain is Isoprenyl transferase (226 aa).

Asp12 is an active-site residue. Asp12 provides a ligand contact to Mg(2+). Substrate-binding positions include 13–16 (GNAR), Trp17, Lys25, His29, and 57–59 (SFE). Residue Asn60 is the Proton acceptor of the active site. Residues Trp61, Arg63, Arg174, and 180-182 (RIS) each bind substrate. Position 193 (Glu193) interacts with Mg(2+).

It belongs to the UPP synthase family. As to quaternary structure, homodimer. It depends on Mg(2+) as a cofactor.

Functionally, catalyzes the condensation of isopentenyl diphosphate (IPP) with allylic pyrophosphates generating different type of terpenoids. The protein is Isoprenyl transferase of Rickettsia prowazekii (strain Madrid E).